The primary structure comprises 134 residues: Ethylmalonyl-CoA/methylmalonyl-CoA epimerase (134 aa).

The region spanning 4-134 (RLNHVAIAVP…NGCLVELEQV (131 aa)) is the VOC domain. Co(2+)-binding residues include H7, H79, and E130. Residue E130 is the Proton donor/acceptor of the active site.

Belongs to the methylmalonyl-CoA epimerase family. The cofactor is Co(2+). It depends on Mn(2+) as a cofactor.

It carries out the reaction (2R)-ethylmalonyl-CoA = (2S)-ethylmalonyl-CoA. The catalysed reaction is (R)-methylmalonyl-CoA = (S)-methylmalonyl-CoA. Its function is as follows. Promiscuous isomerase that catalyzes epimerization of both ethylmalonyl-CoA and methylmalonyl-CoA. Has thus a dual role in the ethylmalonyl-CoA pathway for acetyl-CoA assimilation required for R.sphaeroides growth on acetate as sole carbon source. This chain is Ethylmalonyl-CoA/methylmalonyl-CoA epimerase, found in Cereibacter sphaeroides (strain ATCC 17023 / DSM 158 / JCM 6121 / CCUG 31486 / LMG 2827 / NBRC 12203 / NCIMB 8253 / ATH 2.4.1.) (Rhodobacter sphaeroides).